Here is a 449-residue protein sequence, read N- to C-terminus: Adenylyltransferase and sulfurtransferase MOCS3 (449 aa).

Residues Gly96, Asp117, 124–128, Lys141, and 185–186 contribute to the ATP site; these read SNLHR and DN. Zn(2+)-binding residues include Cys227 and Cys230. Cys244 serves as the catalytic Glycyl thioester intermediate; for adenylyltransferase activity. Zn(2+)-binding residues include Cys302 and Cys305. The Rhodanese domain occupies 351-447; sequence QDKPHLLLDV…WTNQIDENFP (97 aa). The Cysteine persulfide intermediate; for sulfurtransferase activity role is filled by Cys406.

The protein in the N-terminal section; belongs to the HesA/MoeB/ThiF family. UBA4 subfamily. Requires Zn(2+) as cofactor.

The protein resides in the cytoplasm. The protein localises to the cytosol. It catalyses the reaction [molybdopterin-synthase sulfur-carrier protein]-C-terminal Gly-Gly + ATP + H(+) = [molybdopterin-synthase sulfur-carrier protein]-C-terminal Gly-Gly-AMP + diphosphate. It carries out the reaction [molybdopterin-synthase sulfur-carrier protein]-C-terminal Gly-Gly-AMP + S-sulfanyl-L-cysteinyl-[cysteine desulfurase] + AH2 = [molybdopterin-synthase sulfur-carrier protein]-C-terminal-Gly-aminoethanethioate + L-cysteinyl-[cysteine desulfurase] + A + AMP + 2 H(+). It functions in the pathway tRNA modification; 5-methoxycarbonylmethyl-2-thiouridine-tRNA biosynthesis. It participates in cofactor biosynthesis; molybdopterin biosynthesis. Plays a central role in 2-thiolation of mcm(5)S(2)U at tRNA wobble positions of cytosolic tRNA(Lys), tRNA(Glu) and tRNA(Gln). Also essential during biosynthesis of the molybdenum cofactor. Acts by mediating the C-terminal thiocarboxylation of sulfur carriers URM1 and MOCS2A. Its N-terminus first activates URM1 and MOCS2A as acyl-adenylates (-COAMP), then the persulfide sulfur on the catalytic cysteine is transferred to URM1 and MOCS2A to form thiocarboxylation (-COSH) of their C-terminus. The reaction probably involves hydrogen sulfide that is generated from the persulfide intermediate and that acts as a nucleophile towards URM1 and MOCS2A. Subsequently, a transient disulfide bond is formed. Does not use thiosulfate as sulfur donor; NFS1 probably acting as a sulfur donor for thiocarboxylation reactions. In Drosophila grimshawi (Hawaiian fruit fly), this protein is Adenylyltransferase and sulfurtransferase MOCS3.